A 316-amino-acid polypeptide reads, in one-letter code: Glutamyl-Q tRNA(Asp) synthetase (316 aa).

L-glutamate is bound by residues 13–17 and D49; that span reads RFAPS. A 'HIGH' region motif is present at residues 16 to 26; it reads PSPSGDLHFGS. Zn(2+) is bound by residues C105, C107, Y119, and C123. Y176 and R194 together coordinate L-glutamate. The 'KMSKS' region motif lies at 232 to 236; it reads KLSKQ. K235 serves as a coordination point for ATP.

It belongs to the class-I aminoacyl-tRNA synthetase family. GluQ subfamily. Zn(2+) is required as a cofactor.

Its function is as follows. Catalyzes the tRNA-independent activation of glutamate in presence of ATP and the subsequent transfer of glutamate onto a tRNA(Asp). Glutamate is transferred on the 2-amino-5-(4,5-dihydroxy-2-cyclopenten-1-yl) moiety of the queuosine in the wobble position of the QUC anticodon. In Photorhabdus laumondii subsp. laumondii (strain DSM 15139 / CIP 105565 / TT01) (Photorhabdus luminescens subsp. laumondii), this protein is Glutamyl-Q tRNA(Asp) synthetase.